The following is an 886-amino-acid chain: MSETKNPGDHTLSVSPTKTLSLKRPVEAGIVRQSFSHGRSKAVVVEKVKRRALGEPHVLRESAPALDVVAPAPQAAPPAPTQQPQPRVASRPQPQQRSSSGVILRSLTEEEREARSRALSGAHEREVEERKRAEIEAKARDEREAREREERAAAEARKREEETRRLQEAESKRRSESEAKRRLAGGEPAPAGANAAPRKAPALSAAPGSAAPSGQPGPAGAVGARPAEEEDAAKRIIRRPGMPTKVIVARPVKGAEQKSRGRLTVASATGDEEERTRSIAAFRRRTQRLKGHVSETKEKLSREVVLPETITIQELANRMSERAVDVIKLMMKQGQMAKITDVIDADTAQLIAEELGHTVKRVAESDVEEGLFDSPDVEEHLISRPPVVTIMGHVDHGKTSLLDALRHANVVSGEAGGITQHIGAYQIVASNGLPITFIDTPGHAAFTAMRARGAKVTDIVVLVVAADDGVMPQTAEAISHAKAAGVPIIVAINKIDKPDAKPERVRQELLQYEVQVESLGGDTLEVEVSATKKINLDKLADLIALQAELLDLKASPDRPAEGTVIEARLDKGRGPVATVLVQRGTLKVGDLIVGGSQWGKVRALIDDKGVNRQEAGPSMPVEVLGFSGSPEAGDRVGVVENEARAREIAAYRDRQKREQAAARGNLARGSLADMMSQLKTAARKEFPLVIKADVQGSLEAIVATLEKLNTDEVAARIIHAGVGGITESDVTLAEASGAVLIGFNVRAHKEGRQLAEQQGLEIRYYNIIYNLVDDVKAAMSGLLAPTLREDMLGNAEILEVFHISKVGKVAGCRVTDGRVERGANVRLIRDNVVVHEGKLSTLKRFKDEVKEVVAGQECGMAFEHYQDMRVGDVIECYRVEEIQRTL.

Disordered regions lie at residues 1 to 25 (MSET…LKRP), 50 to 229 (RRAL…PAEE), and 253 to 272 (KGAE…TGDE). Residues 50-60 (RRALGEPHVLR) are compositionally biased toward basic and acidic residues. Residues 63 to 73 (APALDVVAPAP) are compositionally biased toward low complexity. Positions 74 to 83 (QAAPPAPTQQ) are enriched in pro residues. Low complexity predominate over residues 84-106 (PQPRVASRPQPQQRSSSGVILRS). Over residues 107-181 (LTEEEREARS…KRRSESEAKR (75 aa)) the composition is skewed to basic and acidic residues. The segment covering 185 to 225 (GGEPAPAGANAAPRKAPALSAAPGSAAPSGQPGPAGAVGAR) has biased composition (low complexity). Residues 383-553 (SRPPVVTIMG…ALQAELLDLK (171 aa)) form the tr-type G domain. A G1 region spans residues 392–399 (GHVDHGKT). Residue 392-399 (GHVDHGKT) participates in GTP binding. The interval 417 to 421 (GITQH) is G2. The interval 439-442 (DTPG) is G3. Residues 439 to 443 (DTPGH) and 493 to 496 (NKID) contribute to the GTP site. The interval 493–496 (NKID) is G4. The tract at residues 529-531 (SAT) is G5.

Belongs to the TRAFAC class translation factor GTPase superfamily. Classic translation factor GTPase family. IF-2 subfamily.

The protein resides in the cytoplasm. One of the essential components for the initiation of protein synthesis. Protects formylmethionyl-tRNA from spontaneous hydrolysis and promotes its binding to the 30S ribosomal subunits. Also involved in the hydrolysis of GTP during the formation of the 70S ribosomal complex. This is Translation initiation factor IF-2 from Methylocella silvestris (strain DSM 15510 / CIP 108128 / LMG 27833 / NCIMB 13906 / BL2).